The primary structure comprises 623 residues: DNA mismatch repair protein MutL (623 aa).

A compositionally biased stretch (polar residues) spans 353–368 (AQQSAPRPANSYSPAS). Positions 353–389 (AQQSAPRPANSYSPASWRTAPPAPRSEWSPQTAQTAH) are disordered.

This sequence belongs to the DNA mismatch repair MutL/HexB family.

Functionally, this protein is involved in the repair of mismatches in DNA. It is required for dam-dependent methyl-directed DNA mismatch repair. May act as a 'molecular matchmaker', a protein that promotes the formation of a stable complex between two or more DNA-binding proteins in an ATP-dependent manner without itself being part of a final effector complex. This chain is DNA mismatch repair protein MutL, found in Brucella melitensis biotype 2 (strain ATCC 23457).